The sequence spans 411 residues: Adenylosuccinate synthetase (411 aa).

GTP contacts are provided by residues 11-17 (GDEGKGK) and 39-41 (GHT). Asp-12 serves as the catalytic Proton acceptor. Mg(2+) is bound by residues Asp-12 and Gly-39. Residues 12–15 (DEGK), 37–40 (NAGH), Thr-121, Arg-135, Gln-215, Thr-230, and Arg-294 each bind IMP. The Proton donor role is filled by His-40. 290 to 296 (TTTKRPR) lines the substrate pocket. GTP-binding positions include Arg-296, 322–324 (KLD), and 400–402 (STS).

This sequence belongs to the adenylosuccinate synthetase family. Homodimer. Requires Mg(2+) as cofactor.

The protein resides in the cytoplasm. The enzyme catalyses IMP + L-aspartate + GTP = N(6)-(1,2-dicarboxyethyl)-AMP + GDP + phosphate + 2 H(+). The protein operates within purine metabolism; AMP biosynthesis via de novo pathway; AMP from IMP: step 1/2. Plays an important role in the de novo pathway of purine nucleotide biosynthesis. Catalyzes the first committed step in the biosynthesis of AMP from IMP. This Helicobacter pylori (strain P12) protein is Adenylosuccinate synthetase.